Reading from the N-terminus, the 238-residue chain is MPPRKKRRQPSQKAPLLFHQQPLEGPKHSCASTQLPITHTRQVPSKPIDHSTITSWVSPDFDTAAGSLFPAYQKHQNRARHSSRKPTTSKFPHLTFESPQSSSSETLGIPLIRECPSESEKDVSRRPLVPVLSPQSCGNMSVQALQSLPYVFIPPDIQTPESSSVKEELIPQDQKENSLLSCTLHTGTPNSPEPGPVLVKDTPEDKYGIKVTWRRRQHLLAYLRERGKLSRSQFLVKS.

A compositionally biased stretch (basic residues) spans 1 to 10 (MPPRKKRRQP). The disordered stretch occupies residues 1–31 (MPPRKKRRQPSQKAPLLFHQQPLEGPKHSCA). Serine 51 bears the Phosphoserine; by PLK1 mark. An RAD1-binding motif motif is present at residues 55–61 (SWVSPDF). A disordered region spans residues 74 to 105 (KHQNRARHSSRKPTTSKFPHLTFESPQSSSSE). Basic residues predominate over residues 75-84 (HQNRARHSSR). The D-box signature appears at 125–132 (RRPLVPVL). The KEN box motif lies at 174–178 (QKENS).

Interacts (when phosphorylated by PLK1) with POLQ; promoting POLQ recruitment to DNA damage sites. Interacts with RAD1; interaction is direct and promotes association with the 9-1-1 (RAD9-RAD1-HUS1) complex. Interacts with RAD18. Interacts with TOPBP1. Interacts with UBE2N. Phosphorylated at Ser-51 by PLK1, promoting interaction with polymerase theta (POLQ). Post-translationally, ubiquitinated and degraded by the APC/C complex upon mitotic exit. In terms of tissue distribution, weakly expressed in testis, prostate, ovary, thymus and small intestine. Expressed strongly in breast cancer cells.

The protein localises to the nucleus. The protein resides in the chromosome. Functionally, involved in microhomology-mediated end-joining (MMEJ) DNA repair by promoting recruitment of polymerase theta (POLQ) to DNA damage sites during mitosis. MMEJ is an alternative non-homologous end-joining (NHEJ) machinery that takes place during mitosis to repair double-strand breaks in DNA that originate in S-phase. Accumulates in M-phase; following phosphorylation by PLK1, interacts with POLQ, enabling its recruitment to double-strand breaks for subsequent repair. Also involved in the DNA damage response (DDR) signaling in response to genotoxic stresses such as ionizing radiation (IR) during the S phase. Recruited to sites of DNA damage through interaction with the 9-1-1 cell-cycle checkpoint response complex and TOPBP1 in a ATR-dependent manner. Required for the progression of the G1 to S phase transition. Plays a role in the stimulation of CHEK1 phosphorylation. The sequence is that of RAD9, HUS1, RAD1-interacting nuclear orphan protein 1 from Homo sapiens (Human).